Reading from the N-terminus, the 255-residue chain is Putative Myb family transcription factor At1g14600 (255 aa).

Residues 20–80 (RSPVPRLRWT…HLQMYRGSRI (61 aa)) enclose the HTH myb-type domain. Residues 51 to 76 (PKLVLKIMDVKGLTISHVKSHLQMYR) constitute a DNA-binding region (H-T-H motif). Residues 80 to 110 (ITLLGKPEESSSPSSRRRRRQDNEEDHLHDN) are disordered.

It localises to the nucleus. Functionally, putative transcription factor. The protein is Putative Myb family transcription factor At1g14600 of Arabidopsis thaliana (Mouse-ear cress).